A 125-amino-acid chain; its full sequence is Acidic phospholipase A2 HTe (125 aa).

7 disulfide bridges follow: Cys11/Cys77, Cys27/Cys124, Cys29/Cys45, Cys44/Cys105, Cys51/Cys98, Cys61/Cys91, and Cys84/Cys96. Positions 28, 30, and 32 each coordinate Ca(2+). His48 is an active-site residue. Asp49 is a Ca(2+) binding site. The active site involves Asp99.

It belongs to the phospholipase A2 family. Group I subfamily. D49 sub-subfamily. The cofactor is Ca(2+). Post-translationally, no glycosylation was detected on this protein. Expressed by the venom gland.

It is found in the secreted. The enzyme catalyses a 1,2-diacyl-sn-glycero-3-phosphocholine + H2O = a 1-acyl-sn-glycero-3-phosphocholine + a fatty acid + H(+). Snake venom phospholipase A2 (PLA2) that blocks neuromuscular transmission, but that does not produce blockade by virtue of a selective action on nerve endings. Instead, the toxin acts both on nerve and on muscle. PLA2 catalyzes the calcium-dependent hydrolysis of the 2-acyl groups in 3-sn-phosphoglycerides. The chain is Acidic phospholipase A2 HTe from Notechis scutatus scutatus (Mainland tiger snake).